A 47-amino-acid chain; its full sequence is Delta-actitoxin-Ael1a (47 aa).

Cystine bridges form between Cys-4–Cys-44, Cys-6–Cys-34, and Cys-27–Cys-45.

It belongs to the sea anemone sodium channel inhibitory toxin family. Type I subfamily. As to expression, expressed in ectodermal glands. Not expressed in nematocytes.

The protein resides in the secreted. Its function is as follows. Binds specifically to voltage-gated sodium channels (Nav), thereby delaying their inactivation during signal transduction. It strongly stimulates mammalian cardiac muscle contraction. Paralyzes the shore crab (C.maenas) by tetanic contractions after intramuscular injection. This Anthopleura elegantissima (Green aggregating anemone) protein is Delta-actitoxin-Ael1a.